We begin with the raw amino-acid sequence, 506 residues long: Hexokinase-6 (506 aa).

The chain crosses the membrane as a helical span at residues 6–26; the sequence is VVGTAVVVCAAAAAAVGVAVV. The Hexokinase domain maps to 43-497; that stretch reads RRAAAVIEEV…SGIGAALLAA (455 aa). The segment at 98-236 is hexokinase small subdomain; sequence TGDEHGLFYA…GLDMKVTALV (139 aa). ADP is bound by residues G112, T113, and N114. D-glucose contacts are provided by T202, K203, N237, and D238. A hexokinase large subdomain region spans residues 237–486; that stretch reads NDTVGTLAGG…SSVVVKLAND (250 aa). T261 is a binding site for ADP. Positions 264, 292, and 323 each coordinate D-glucose. G451 is an ADP binding site.

Belongs to the hexokinase family. As to expression, expressed in roots, leaves, flowers, immature seeds and endosperm.

The protein resides in the plastid. Its subcellular location is the chloroplast outer membrane. It carries out the reaction a D-hexose + ATP = a D-hexose 6-phosphate + ADP + H(+). The enzyme catalyses D-fructose + ATP = D-fructose 6-phosphate + ADP + H(+). The catalysed reaction is D-glucose + ATP = D-glucose 6-phosphate + ADP + H(+). The protein operates within carbohydrate metabolism; hexose metabolism. It functions in the pathway carbohydrate degradation; glycolysis; D-glyceraldehyde 3-phosphate and glycerone phosphate from D-glucose: step 1/4. Fructose and glucose phosphorylating enzyme. Functions as a glucose sensor for plant growth and photosynthesis. In Oryza sativa subsp. japonica (Rice), this protein is Hexokinase-6 (HXK6).